We begin with the raw amino-acid sequence, 65 residues long: Large ribosomal subunit protein uL29 (65 aa).

The protein belongs to the universal ribosomal protein uL29 family.

This is Large ribosomal subunit protein uL29 (rpmC) from Buchnera aphidicola subsp. Acyrthosiphon pisum (strain APS) (Acyrthosiphon pisum symbiotic bacterium).